Here is a 498-residue protein sequence, read N- to C-terminus: Lysine--tRNA ligase (498 aa).

The Mg(2+) site is built by Glu401 and Glu408.

Belongs to the class-II aminoacyl-tRNA synthetase family. As to quaternary structure, homodimer. Mg(2+) is required as a cofactor.

It is found in the cytoplasm. It catalyses the reaction tRNA(Lys) + L-lysine + ATP = L-lysyl-tRNA(Lys) + AMP + diphosphate. The chain is Lysine--tRNA ligase from Dehalococcoides mccartyi (strain CBDB1).